An 87-amino-acid polypeptide reads, in one-letter code: Cell division topological specificity factor (87 aa).

The protein belongs to the MinE family.

In terms of biological role, prevents the cell division inhibition by proteins MinC and MinD at internal division sites while permitting inhibition at polar sites. This ensures cell division at the proper site by restricting the formation of a division septum at the midpoint of the long axis of the cell. The sequence is that of Cell division topological specificity factor from Herpetosiphon aurantiacus (strain ATCC 23779 / DSM 785 / 114-95).